The sequence spans 207 residues: Glycerol-3-phosphate acyltransferase (207 aa).

A run of 6 helical transmembrane segments spans residues 1–21 (MIIIAYLLGSIQTGLWIGKYF), 42–62 (ILGVKAGIVTLTIDILKGTLA), 65–85 (IPIILGITTISPFFIGFFAII), 105–125 (AGVLLGFAPSFFLYLLVIFLL), 138–158 (ITVAVVGILSVLIFPLVGFIL), and 159–179 (TDYDWIFTTVVILMALTIIIR).

The protein belongs to the PlsY family. Probably interacts with PlsX.

Its subcellular location is the cell membrane. It carries out the reaction an acyl phosphate + sn-glycerol 3-phosphate = a 1-acyl-sn-glycero-3-phosphate + phosphate. It functions in the pathway lipid metabolism; phospholipid metabolism. In terms of biological role, catalyzes the transfer of an acyl group from acyl-phosphate (acyl-PO(4)) to glycerol-3-phosphate (G3P) to form lysophosphatidic acid (LPA). This enzyme utilizes acyl-phosphate as fatty acyl donor, but not acyl-CoA or acyl-ACP. The polypeptide is Glycerol-3-phosphate acyltransferase (Streptococcus agalactiae serotype Ia (strain ATCC 27591 / A909 / CDC SS700)).